The primary structure comprises 256 residues: Floral homeotic protein APETALA 1 (256 aa).

The region spanning 1 to 61 (MGRGRVQLKR…GKLFEYSTDS (61 aa)) is the MADS-box domain. Residues 88–178 (NTNWSMEYNR…FKQIKEREKI (91 aa)) form the K-box domain.

Homodimer capable of binding to CArG-box sequences.

The protein localises to the nucleus. Functionally, transcription factor that promotes early floral meristem identity in synergy with LEAFY. Displays a redundant function with CAULIFLOWER in the up-regulation of LEAFY. Required subsequently for the transition of an inflorescence meristem into a floral meristem, and for the normal development of sepals and petals in flowers. Regulates positively B class homeotic proteins. The sequence is that of Floral homeotic protein APETALA 1 (AP1) from Citrus sinensis (Sweet orange).